Reading from the N-terminus, the 208-residue chain is Ribosomal RNA large subunit methyltransferase E (208 aa).

Gly-63, Trp-65, Asp-83, Asp-99, and Asp-124 together coordinate S-adenosyl-L-methionine. Lys-164 acts as the Proton acceptor in catalysis.

This sequence belongs to the class I-like SAM-binding methyltransferase superfamily. RNA methyltransferase RlmE family.

The protein localises to the cytoplasm. It catalyses the reaction uridine(2552) in 23S rRNA + S-adenosyl-L-methionine = 2'-O-methyluridine(2552) in 23S rRNA + S-adenosyl-L-homocysteine + H(+). Functionally, specifically methylates the uridine in position 2552 of 23S rRNA at the 2'-O position of the ribose in the fully assembled 50S ribosomal subunit. The chain is Ribosomal RNA large subunit methyltransferase E from Salmonella arizonae (strain ATCC BAA-731 / CDC346-86 / RSK2980).